A 176-amino-acid chain; its full sequence is Large ribosomal subunit protein uL6 (176 aa).

It belongs to the universal ribosomal protein uL6 family. In terms of assembly, part of the 50S ribosomal subunit.

Functionally, this protein binds to the 23S rRNA, and is important in its secondary structure. It is located near the subunit interface in the base of the L7/L12 stalk, and near the tRNA binding site of the peptidyltransferase center. The chain is Large ribosomal subunit protein uL6 from Shewanella sediminis (strain HAW-EB3).